A 95-amino-acid polypeptide reads, in one-letter code: Co-chaperonin GroES (95 aa).

The protein belongs to the GroES chaperonin family. As to quaternary structure, heptamer of 7 subunits arranged in a ring. Interacts with the chaperonin GroEL.

Its subcellular location is the cytoplasm. Functionally, together with the chaperonin GroEL, plays an essential role in assisting protein folding. The GroEL-GroES system forms a nano-cage that allows encapsulation of the non-native substrate proteins and provides a physical environment optimized to promote and accelerate protein folding. GroES binds to the apical surface of the GroEL ring, thereby capping the opening of the GroEL channel. The sequence is that of Co-chaperonin GroES from Glaesserella parasuis serovar 5 (strain SH0165) (Haemophilus parasuis).